The primary structure comprises 487 residues: Glutamyl-tRNA(Gln) amidotransferase subunit A (487 aa).

Catalysis depends on charge relay system residues K80 and S155. S179 (acyl-ester intermediate) is an active-site residue.

This sequence belongs to the amidase family. GatA subfamily. As to quaternary structure, heterotrimer of A, B and C subunits.

It carries out the reaction L-glutamyl-tRNA(Gln) + L-glutamine + ATP + H2O = L-glutaminyl-tRNA(Gln) + L-glutamate + ADP + phosphate + H(+). Its function is as follows. Allows the formation of correctly charged Gln-tRNA(Gln) through the transamidation of misacylated Glu-tRNA(Gln) in organisms which lack glutaminyl-tRNA synthetase. The reaction takes place in the presence of glutamine and ATP through an activated gamma-phospho-Glu-tRNA(Gln). In Leptospira interrogans serogroup Icterohaemorrhagiae serovar Lai (strain 56601), this protein is Glutamyl-tRNA(Gln) amidotransferase subunit A.